We begin with the raw amino-acid sequence, 184 residues long: Lipoprotein signal peptidase (184 aa).

A run of 3 helical transmembrane segments spans residues 23–43 (FLYY…FQVF), 88–108 (PGLV…FLVF), and 110–130 (TSYN…GNFF). Residues D142 and D157 contribute to the active site. A helical transmembrane segment spans residues 156–176 (ADCCITFSFIGLFLSFLIQFF).

It belongs to the peptidase A8 family.

Its subcellular location is the cell membrane. The enzyme catalyses Release of signal peptides from bacterial membrane prolipoproteins. Hydrolyzes -Xaa-Yaa-Zaa-|-(S,diacylglyceryl)Cys-, in which Xaa is hydrophobic (preferably Leu), and Yaa (Ala or Ser) and Zaa (Gly or Ala) have small, neutral side chains.. It functions in the pathway protein modification; lipoprotein biosynthesis (signal peptide cleavage). Functionally, this protein specifically catalyzes the removal of signal peptides from prolipoproteins. The sequence is that of Lipoprotein signal peptidase from Mycoplasma pneumoniae (strain ATCC 29342 / M129 / Subtype 1) (Mycoplasmoides pneumoniae).